The sequence spans 178 residues: M-phase-specific PLK1-interacting protein (178 aa).

Residues 1-15 show a composition bias toward pro residues; sequence MHRPNFRPPTPPYPS. The disordered stretch occupies residues 1 to 134; that stretch reads MHRPNFRPPT…RGREKRMSNE (134 aa). Over residues 17–34 the composition is skewed to gly residues; sequence GIGGWGGGNNFRGALGGG. At Arg-36 the chain carries Asymmetric dimethylarginine. 2 positions are modified to phosphoserine: Ser-39 and Ser-46. Residue Thr-50 is modified to Phosphothreonine. Arg-56 carries the omega-N-methylarginine modification. Asymmetric dimethylarginine occurs at positions 58, 67, and 76. The segment covering 78 to 96 has biased composition (low complexity); that stretch reads GSPSPGGYPGSYSRSPAGS. Ser-79, Ser-81, Ser-92, Ser-103, and Ser-114 each carry phosphoserine. Positions 97-121 are enriched in polar residues; the sequence is QHQFGYSPGQQQTYPQGSPRTSTPF. Arg-116 is modified (omega-N-methylarginine). At Thr-119 the chain carries Phosphothreonine. Ser-123 and Ser-132 each carry phosphoserine.

In terms of assembly, interacts with PLK1; phosphorylation-dependent. In terms of processing, phosphorylated during mitosis in the cell cycle probably by CDK1.

The protein resides in the nucleus. Its subcellular location is the cytoplasm. It localises to the cytoskeleton. It is found in the microtubule organizing center. The protein localises to the centrosome. In terms of biological role, may play a role in maintenance of cell cycle integrity by regulating mitosis or cytokinesis. The protein is M-phase-specific PLK1-interacting protein (Mplkip) of Mus musculus (Mouse).